The primary structure comprises 884 residues: MSGVNDIRSTFLDYFKKNGHEIVPSSPLVPRNDPTLMFTNAGMVQFKNVFTGLEKRPYATATTSQKCVRAGGKHNDLDNVGYTARHLTFFEMLGNFSFGDYFKENAIELAWKLVTEGFGLPKHRLLVTVYSEDEEAAALWKKIAGFSDDKIIRIPTSDNFWQMGDTGPCGPCSEIFIDQGENVWGGPPGSPEEDGDRFLEFWNLVFMQFEQTEPGVRNPLPRPSIDTGMGLERMACILQGVQSVFDTDLFRTLTGTIEDTIGVKAEGSASHRVIADHLRSSAFLIADGVLPSNEGRGYVLRRIMRRAMRHAQLLGAKEPLMYKLLPTLVQEMGRAYPELARAEALISETLKLEEGRFRKTLERGLSLLSDATADLDKGDMLDGETAFKLYDTYGFPLDLTQDALRAREIGVDIAGFTDAMQRQKAEARSHWAGSGEKATETIWFELREKHGATEFLGYDTEAAEGVVQAIVRDGAVAAEAKAGDKVQIVVNQTPFYGESGGQMGDAGVISSDHGKIEISDTQKRGEGLFVHLGTVIEGVVRDGDAVAMTVDHARRSRLRANHSATHLLHEALREVLGTHVAQKGSLVAPERLRFDVSHPKPMTPEELKIVEDMANEIVLQNSPVTTRLMSVDDAIAEGAMALFGEKYGDEVRVVSMGTGLHGAKSNKPYSVELCGGTHVSATGQIGLVRILGESAVGAGVRRLEAVTGESAREYLAEQDDRVKTLAASLKVQPSEVLSRVEALIDERRKLEKELADAKRKLAMGGGQGGSGDAVREVAGVKFLGKSISGVDPKDLKGLADEGKTSIGSGVVALIGVSEDGKASAVVAVTPDLVERYSAVDLVRIASVALGGKGGGGRPDMAQAGGPDGSKADEAIEAVALALAG.

Zn(2+) is bound by residues His562, His566, Cys674, and His678.

It belongs to the class-II aminoacyl-tRNA synthetase family. Requires Zn(2+) as cofactor.

It localises to the cytoplasm. It carries out the reaction tRNA(Ala) + L-alanine + ATP = L-alanyl-tRNA(Ala) + AMP + diphosphate. Functionally, catalyzes the attachment of alanine to tRNA(Ala) in a two-step reaction: alanine is first activated by ATP to form Ala-AMP and then transferred to the acceptor end of tRNA(Ala). Also edits incorrectly charged Ser-tRNA(Ala) and Gly-tRNA(Ala) via its editing domain. The polypeptide is Alanine--tRNA ligase (Rhizobium etli (strain ATCC 51251 / DSM 11541 / JCM 21823 / NBRC 15573 / CFN 42)).